The primary structure comprises 524 residues: Serine/threonine-protein phosphatase 2A 56 kDa regulatory subunit gamma isoform (524 aa).

Position 1 is an N-acetylmethionine (Met1). The segment at 476–508 (SDEARQAQKELKKDRPLVRRKSELPQDPHTEKA) is disordered.

The protein belongs to the phosphatase 2A regulatory subunit B56 family. PP2A consists of a common heterodimeric core enzyme, composed of PPP2CA a 36 kDa catalytic subunit (subunit C) and PPP2R1A a 65 kDa constant regulatory subunit (PR65 or subunit A), that associates with a variety of regulatory subunits. Proteins that associate with the core dimer include three families of regulatory subunits B (the R2/B/PR55/B55, R3/B''/PR72/PR130/PR59 and R5/B'/B56 families), the 48 kDa variable regulatory subunit, viral proteins, and cell signaling molecules. Interacts with SGO1. Interacts with SGO1; the interaction is direct. May interact with TP53. Interacts with IER3 and/or ERK kinases; regulates ERK dephosphorylation. Interacts with CIP2A; this interaction stabilizes CIP2A. In terms of tissue distribution, highest levels in heart, liver and brain. Lower levels in skeletal muscle, spleen, kidney and lung. Isoform 4 is testis-specific.

The protein localises to the nucleus. It localises to the chromosome. It is found in the centromere. In terms of biological role, the B regulatory subunit might modulate substrate selectivity and catalytic activity, and might also direct the localization of the catalytic enzyme to a particular subcellular compartment. The PP2A-PPP2R5C holoenzyme may activate TP53 and play a role in DNA damage-induced inhibition of cell proliferation. PP2A-PPP2R5C may also regulate the ERK signaling pathway through ERK dephosphorylation. The chain is Serine/threonine-protein phosphatase 2A 56 kDa regulatory subunit gamma isoform (Ppp2r5c) from Mus musculus (Mouse).